Consider the following 516-residue polypeptide: RNA-binding region-containing protein 3 (516 aa).

4 disordered regions span residues methionine 1–arginine 27, valine 106–glutamate 130, glutamate 210–arginine 254, and alanine 264–arginine 283. At serine 21 the chain carries Phosphoserine. An RRM 1 domain is found at arginine 27 to glutamate 102. Position 108 is a phosphoserine (serine 108). Residues threonine 115–glutamate 130 show a composition bias toward basic and acidic residues. A compositionally biased stretch (pro residues) spans alanine 217–proline 230. Over residues lysine 269–arginine 283 the composition is skewed to basic residues. The 84-residue stretch at cysteine 419–serine 502 folds into the RRM 2 domain.

Component of the U11/U12 snRNPs that are part of the U12-type spliceosome. Found in a complex with m(7)G-capped U12 snRNA. Interacts with PDCD7.

It is found in the nucleus. In terms of biological role, participates in pre-mRNA U12-dependent splicing, performed by the minor spliceosome which removes U12-type introns. U12-type introns comprises less than 1% of all non-coding sequences. Binds to the 3'-stem-loop of m(7)G-capped U12 snRNA. The sequence is that of RNA-binding region-containing protein 3 (RNPC3) from Bos taurus (Bovine).